The chain runs to 144 residues: Large ribosomal subunit protein uL15 (144 aa).

The segment covering 1-14 (MKLHELKPNEGARD) has biased composition (basic and acidic residues). Residues 1–43 (MKLHELKPNEGARDVRKRVGRGTSSGTGKTAGRGQKGQKARSK) are disordered. A compositionally biased stretch (gly residues) spans 23 to 35 (TSSGTGKTAGRGQ).

This sequence belongs to the universal ribosomal protein uL15 family. In terms of assembly, part of the 50S ribosomal subunit.

In terms of biological role, binds to the 23S rRNA. This chain is Large ribosomal subunit protein uL15, found in Latilactobacillus sakei subsp. sakei (strain 23K) (Lactobacillus sakei subsp. sakei).